We begin with the raw amino-acid sequence, 424 residues long: Kynurenine--oxoglutarate transaminase 1 (424 aa).

G36 is a substrate binding site. N6-succinyllysine is present on K82. N185 lines the substrate pocket. Position 247 is an N6-(pyridoxal phosphate)lysine (K247). R398 is a substrate binding site. K413 carries the post-translational modification N6-succinyllysine.

Belongs to the class-I pyridoxal-phosphate-dependent aminotransferase family. Homodimer. The cofactor is pyridoxal 5'-phosphate.

It localises to the cytoplasm. The protein resides in the cytosol. It catalyses the reaction L-kynurenine + 2-oxoglutarate = kynurenate + L-glutamate + H2O. The enzyme catalyses 3-phenylpyruvate + L-glutamine = 2-oxoglutaramate + L-phenylalanine. It carries out the reaction an S-substituted L-cysteine + H2O = a thiol + pyruvate + NH4(+). The protein operates within amino-acid degradation; L-kynurenine degradation; kynurenate from L-kynurenine: step 1/2. Functionally, catalyzes the irreversible transamination of the L-tryptophan metabolite L-kynurenine to form kynurenic acid (KA), an intermediate in the tryptophan catabolic pathway which is also a broad spectrum antagonist of the three ionotropic excitatory amino acid receptors among others. Metabolizes the cysteine conjugates of certain halogenated alkenes and alkanes to form reactive metabolites. Catalyzes the beta-elimination of S-conjugates and Se-conjugates of L-(seleno)cysteine, resulting in the cleavage of the C-S or C-Se bond. The sequence is that of Kynurenine--oxoglutarate transaminase 1 (Kyat1) from Mus musculus (Mouse).